A 687-amino-acid polypeptide reads, in one-letter code: Protein Smaug homolog 2 (687 aa).

The span at 160–172 (TRPEPSYHSRQGS) shows a compositional bias: basic and acidic residues. The interval 160–301 (TRPEPSYHSR…NTFQEDGSGM (142 aa)) is disordered. A Phosphoserine modification is found at Ser172. 2 stretches are compositionally biased toward low complexity: residues 175 to 190 (WGGP…GPGW) and 200 to 211 (HVPFHPSSSVPP). Positions 215–224 (SIGSNANTGL) are enriched in polar residues. Phosphoserine occurs at positions 271, 278, 279, and 281. The span at 278–290 (SSGSEQTEEQGSS) shows a compositional bias: low complexity. Residues 299–372 (SGMKDVPSWL…LKSLEKDVLE (74 aa)) enclose the SAM domain. Thr400 is subject to Phosphothreonine. Positions 402–464 (TAKDEGRGEP…APAPVADGDI (63 aa)) are disordered. Basic and acidic residues predominate over residues 424–435 (GSDKGTEAKDPP). Residues 448 to 461 (PSDSSEPAPAPVAD) show a composition bias toward low complexity. Phosphoserine occurs at positions 548, 550, 556, 585, and 593. Residue Arg595 is modified to Asymmetric dimethylarginine. The interval 600–636 (SPSLGGQGRQNLWFANPGGSNSMPSQSRSSVQRTHSL) is disordered. Residues 617-636 (GGSNSMPSQSRSSVQRTHSL) are compositionally biased toward polar residues. Ser621 carries the post-translational modification Phosphoserine.

It belongs to the SMAUG family.

The protein resides in the cytoplasm. Its subcellular location is the nucleus. Has transcriptional repressor activity. Overexpression inhibits the transcriptional activities of AP-1, p53/TP53 and CDKN1A. In Mus musculus (Mouse), this protein is Protein Smaug homolog 2 (Samd4b).